The sequence spans 70 residues: Small ribosomal subunit protein bS18c (70 aa).

It belongs to the bacterial ribosomal protein bS18 family. As to quaternary structure, part of the 30S ribosomal subunit.

It localises to the plastid. The protein localises to the chloroplast. This Pyropia yezoensis (Susabi-nori) protein is Small ribosomal subunit protein bS18c.